Reading from the N-terminus, the 880-residue chain is Kinesin heavy chain (880 aa).

The region spanning 4 to 327 (SIKVVCRFRP…LRFGMRAKAI (324 aa)) is the Kinesin motor domain. ATP-binding positions include 85-92 (GQTGAGKS) and 235-242 (GSEKVGKT). The disordered stretch occupies residues 388–426 (VSGAKAAAAQTPRPSTPSRLATESRAETPVAERSATPGI). A compositionally biased stretch (polar residues) spans 399-408 (PRPSTPSRLA). The stretch at 428–849 (IDKDEREEFL…QEKLTTASHR (422 aa)) forms a coiled coil.

It belongs to the TRAFAC class myosin-kinesin ATPase superfamily. Kinesin family. Kinesin subfamily.

Its subcellular location is the cytoplasm. The protein resides in the cytoskeleton. Kinesin is a microtubule-associated force-producing protein that may play a role in organelle transport. Its motor activity is directed toward the microtubule's plus end. This Botryotinia fuckeliana (Noble rot fungus) protein is Kinesin heavy chain (klp1).